The following is a 222-amino-acid chain: 7-cyano-7-deazaguanine synthase (222 aa).

ATP is bound at residue 11–21 (FSGGQDSTTCL). Positions 187, 195, 198, and 201 each coordinate Zn(2+).

It belongs to the QueC family. Zn(2+) serves as cofactor.

It carries out the reaction 7-carboxy-7-deazaguanine + NH4(+) + ATP = 7-cyano-7-deazaguanine + ADP + phosphate + H2O + H(+). The protein operates within purine metabolism; 7-cyano-7-deazaguanine biosynthesis. Functionally, catalyzes the ATP-dependent conversion of 7-carboxy-7-deazaguanine (CDG) to 7-cyano-7-deazaguanine (preQ(0)). The polypeptide is 7-cyano-7-deazaguanine synthase (Actinobacillus pleuropneumoniae serotype 3 (strain JL03)).